Here is a 359-residue protein sequence, read N- to C-terminus: Phospho-N-acetylmuramoyl-pentapeptide-transferase (359 aa).

10 consecutive transmembrane segments (helical) span residues 3–23 (QILI…PALI), 55–75 (VAII…GLAF), 80–100 (ISAS…VGFL), 117–137 (TAKT…ALGF), 156–176 (IATV…VVSA), 187–207 (LDGL…LITF), 231–251 (LAIV…WNAA), 255–275 (IFMG…ISVT), 280–300 (ILAV…VLQI), and 334–354 (FWLL…GEWL).

It belongs to the glycosyltransferase 4 family. MraY subfamily. Mg(2+) is required as a cofactor.

Its subcellular location is the cell membrane. It catalyses the reaction UDP-N-acetyl-alpha-D-muramoyl-L-alanyl-gamma-D-glutamyl-meso-2,6-diaminopimeloyl-D-alanyl-D-alanine + di-trans,octa-cis-undecaprenyl phosphate = di-trans,octa-cis-undecaprenyl diphospho-N-acetyl-alpha-D-muramoyl-L-alanyl-D-glutamyl-meso-2,6-diaminopimeloyl-D-alanyl-D-alanine + UMP. Its pathway is cell wall biogenesis; peptidoglycan biosynthesis. Catalyzes the initial step of the lipid cycle reactions in the biosynthesis of the cell wall peptidoglycan: transfers peptidoglycan precursor phospho-MurNAc-pentapeptide from UDP-MurNAc-pentapeptide onto the lipid carrier undecaprenyl phosphate, yielding undecaprenyl-pyrophosphoryl-MurNAc-pentapeptide, known as lipid I. This is Phospho-N-acetylmuramoyl-pentapeptide-transferase from Mycolicibacterium paratuberculosis (strain ATCC BAA-968 / K-10) (Mycobacterium paratuberculosis).